Consider the following 483-residue polypeptide: Kynureninase 1 (483 aa).

Residues leucine 147, threonine 148, 175–178 (FPSD), serine 232, aspartate 261, histidine 264, and tyrosine 286 each bind pyridoxal 5'-phosphate. The residue at position 287 (lysine 287) is an N6-(pyridoxal phosphate)lysine. Residues tryptophan 326 and asparagine 354 each coordinate pyridoxal 5'-phosphate.

This sequence belongs to the kynureninase family. As to quaternary structure, homodimer. Requires pyridoxal 5'-phosphate as cofactor.

The protein resides in the cytoplasm. The enzyme catalyses L-kynurenine + H2O = anthranilate + L-alanine + H(+). It carries out the reaction 3-hydroxy-L-kynurenine + H2O = 3-hydroxyanthranilate + L-alanine + H(+). It participates in amino-acid degradation; L-kynurenine degradation; L-alanine and anthranilate from L-kynurenine: step 1/1. Its pathway is cofactor biosynthesis; NAD(+) biosynthesis; quinolinate from L-kynurenine: step 2/3. Functionally, catalyzes the cleavage of L-kynurenine (L-Kyn) and L-3-hydroxykynurenine (L-3OHKyn) into anthranilic acid (AA) and 3-hydroxyanthranilic acid (3-OHAA), respectively. The protein is Kynureninase 1 (bna5-1) of Aspergillus terreus (strain NIH 2624 / FGSC A1156).